We begin with the raw amino-acid sequence, 446 residues long: Tubulin beta-3 chain (446 aa).

Positions 11, 69, 138, 142, 143, 144, 204, and 226 each coordinate GTP. E69 contributes to the Mg(2+) binding site. Residues 421-446 (EYQQYQDATAEEEDYEEEEEDEEVAA) are disordered. The segment covering 429-446 (TAEEEDYEEEEEDEEVAA) has biased composition (acidic residues).

The protein belongs to the tubulin family. In terms of assembly, dimer of alpha and beta chains. A typical microtubule is a hollow water-filled tube with an outer diameter of 25 nm and an inner diameter of 15 nM. Alpha-beta heterodimers associate head-to-tail to form protofilaments running lengthwise along the microtubule wall with the beta-tubulin subunit facing the microtubule plus end conferring a structural polarity. Microtubules usually have 13 protofilaments but different protofilament numbers can be found in some organisms and specialized cells. Mg(2+) is required as a cofactor. In terms of tissue distribution, expressed in roots, second node, leaf sheaths, and suspension cultured cells.

It is found in the cytoplasm. The protein resides in the cytoskeleton. Its function is as follows. Tubulin is the major constituent of microtubules, a cylinder consisting of laterally associated linear protofilaments composed of alpha- and beta-tubulin heterodimers. Microtubules grow by the addition of GTP-tubulin dimers to the microtubule end, where a stabilizing cap forms. Below the cap, tubulin dimers are in GDP-bound state, owing to GTPase activity of alpha-tubulin. The sequence is that of Tubulin beta-3 chain (TUBB3) from Oryza sativa subsp. japonica (Rice).